The chain runs to 179 residues: Protein GrpE (179 aa).

The interval 1 to 20 (MSEETKEEIKNEKVDEEVTE) is disordered.

It belongs to the GrpE family. As to quaternary structure, homodimer.

Its subcellular location is the cytoplasm. Functionally, participates actively in the response to hyperosmotic and heat shock by preventing the aggregation of stress-denatured proteins, in association with DnaK and GrpE. It is the nucleotide exchange factor for DnaK and may function as a thermosensor. Unfolded proteins bind initially to DnaJ; upon interaction with the DnaJ-bound protein, DnaK hydrolyzes its bound ATP, resulting in the formation of a stable complex. GrpE releases ADP from DnaK; ATP binding to DnaK triggers the release of the substrate protein, thus completing the reaction cycle. Several rounds of ATP-dependent interactions between DnaJ, DnaK and GrpE are required for fully efficient folding. The chain is Protein GrpE from Lactococcus lactis subsp. cremoris (strain MG1363).